A 266-amino-acid polypeptide reads, in one-letter code: Glucosamine-6-phosphate deaminase (266 aa).

D72 functions as the Proton acceptor; for enolization step in the catalytic mechanism. D141 functions as the For ring-opening step in the catalytic mechanism. H143 acts as the Proton acceptor; for ring-opening step in catalysis. The active-site For ring-opening step is the E148.

The protein belongs to the glucosamine/galactosamine-6-phosphate isomerase family. NagB subfamily. As to quaternary structure, homohexamer.

It carries out the reaction alpha-D-glucosamine 6-phosphate + H2O = beta-D-fructose 6-phosphate + NH4(+). It functions in the pathway amino-sugar metabolism; N-acetylneuraminate degradation; D-fructose 6-phosphate from N-acetylneuraminate: step 5/5. With respect to regulation, allosterically activated by N-acetylglucosamine 6-phosphate (GlcNAc6P). In terms of biological role, catalyzes the reversible isomerization-deamination of glucosamine 6-phosphate (GlcN6P) to form fructose 6-phosphate (Fru6P) and ammonium ion. This Pectobacterium carotovorum subsp. carotovorum (strain PC1) protein is Glucosamine-6-phosphate deaminase.